We begin with the raw amino-acid sequence, 96 residues long: Small ribosomal subunit protein uS19 (96 aa).

The protein belongs to the universal ribosomal protein uS19 family.

Functionally, protein S19 forms a complex with S13 that binds strongly to the 16S ribosomal RNA. This is Small ribosomal subunit protein uS19 from Gemmatimonas aurantiaca (strain DSM 14586 / JCM 11422 / NBRC 100505 / T-27).